The sequence spans 123 residues: Prostate stem cell antigen (123 aa).

An N-terminal signal peptide occupies residues 1–20 (MKTVFFLLLATYLALHPGAA). The UPAR/Ly6 domain occupies 21–95 (LQCYSCTAQM…CCYSDLCNVN (75 aa)). Disulfide bonds link Cys-23/Cys-48, Cys-26/Cys-35, Cys-41/Cys-66, Cys-70/Cys-86, and Cys-87/Cys-92. N-linked (GlcNAc...) asparagine glycosylation is present at Asn-40. Asn-95 carries GPI-anchor amidated asparagine lipidation. Residues 96–123 (GAHTLKPPTTLGLLTVLCSLLLWGSSRL) constitute a propeptide, removed in mature form.

Interacts with CHRNA4. In terms of tissue distribution, predominantly expressed in prostate. Also found in spleen, liver, lung, prostate, kidney and testis. Expressed in brain cortex; expression is increased in transgenic mouse model of Alzheimer disease (at protein level).

Its subcellular location is the cell membrane. May be involved in the regulation of cell proliferation. Its function is as follows. May act as a modulator of nicotinic acetylcholine receptors (nAChRs) activity. In vitro inhibits nicotine-induced signaling probably implicating alpha-3:beta-2- or alpha-7-containing nAChRs. This Mus musculus (Mouse) protein is Prostate stem cell antigen (Psca).